The chain runs to 428 residues: Dihydroorotase (428 aa).

The Zn(2+) site is built by His61 and His63. Residues 63 to 65 and Asn95 each bind substrate; that span reads HLR. Asp153, His180, and His233 together coordinate Zn(2+). Residue Asn279 coordinates substrate. Asp306 is a Zn(2+) binding site. The active site involves Asp306. Residues His310 and 324-325 contribute to the substrate site; that span reads FG.

The protein belongs to the metallo-dependent hydrolases superfamily. DHOase family. Class I DHOase subfamily. Zn(2+) is required as a cofactor.

It carries out the reaction (S)-dihydroorotate + H2O = N-carbamoyl-L-aspartate + H(+). It participates in pyrimidine metabolism; UMP biosynthesis via de novo pathway; (S)-dihydroorotate from bicarbonate: step 3/3. In terms of biological role, catalyzes the reversible cyclization of carbamoyl aspartate to dihydroorotate. This Geobacillus thermodenitrificans (strain NG80-2) protein is Dihydroorotase.